A 199-amino-acid chain; its full sequence is ATP-dependent Clp protease proteolytic subunit 2 (199 aa).

Ser-98 serves as the catalytic Nucleophile. His-123 is a catalytic residue.

Belongs to the peptidase S14 family. As to quaternary structure, fourteen ClpP subunits assemble into 2 heptameric rings which stack back to back to give a disk-like structure with a central cavity, resembling the structure of eukaryotic proteasomes.

Its subcellular location is the cytoplasm. The enzyme catalyses Hydrolysis of proteins to small peptides in the presence of ATP and magnesium. alpha-casein is the usual test substrate. In the absence of ATP, only oligopeptides shorter than five residues are hydrolyzed (such as succinyl-Leu-Tyr-|-NHMec, and Leu-Tyr-Leu-|-Tyr-Trp, in which cleavage of the -Tyr-|-Leu- and -Tyr-|-Trp bonds also occurs).. Its function is as follows. Cleaves peptides in various proteins in a process that requires ATP hydrolysis. Has a chymotrypsin-like activity. Plays a major role in the degradation of misfolded proteins. The sequence is that of ATP-dependent Clp protease proteolytic subunit 2 from Corynebacterium diphtheriae (strain ATCC 700971 / NCTC 13129 / Biotype gravis).